Reading from the N-terminus, the 489-residue chain is Ribonuclease G (489 aa).

The region spanning 39-128 is the S1 motif domain; sequence GNIYKGRVSR…LTTDITLPSR (90 aa). Aspartate 304 and aspartate 347 together coordinate Mg(2+).

It belongs to the RNase E/G family. RNase G subfamily. In terms of assembly, homodimer, in equilibrium with possible higher multimers. Mg(2+) serves as cofactor.

It is found in the cytoplasm. An endonuclease that acts in the processing of the 5'-end of 16S rRNA and 23S rRNA. It prefers 5'-monophosphorylated substrates and cleaves single-stranded sites rich in A and U residues; contributes to tRNA processing and mRNA turnover. The protein is Ribonuclease G (rng) of Escherichia coli O157:H7.